A 210-amino-acid polypeptide reads, in one-letter code: MGLCSRYKSLTCNSCSMHCQIMPEESPRLQYCANSCFCMWPEESSYFNRGVVEGILTKNHNARLSGYIFVDFSVSFLRLFLEKDWIDYLASTDMGIVLVSDRNMQSLANYWRKHNSAISAVIYNDDGLDVANEKIRQLFIGRYLSFTGGNTLTQMEFTIMGYMVSGYNPYQIAEVLDMDIRSIYAYKQRIEKRMGGKINELFIRSHSVQH.

This sequence to E.coli YkgK.

This is an uncharacterized protein from Escherichia coli (strain K12).